The chain runs to 681 residues: MDERRSSIFSTNIPCRNEQLYGRCPYIDKGCFFQHKNQDNAPASSKPPSATAIDPQNSGFSTKLSINSPSFTPLKLSKTSISSASNKESVPLTRPKSYSSALSSGKNGAAAQQAANSPKTVSLMTSSSKAANALQTHKSSLARAASAVPFSPSKATTVSLKESASLTSLSNNKSVSNLNSISGASSPSGSLVNLHSLTRSASFVPQPSVPNSGQLSNADMSRHILARFPPFFHNLNEQQQKTTSFFLADDHLKWFTYLTQEFYQFANIPKLPSHVLSYHSLIPRRMIVTVLPVLRYATSIYKVIDGNNGLPYSFVQLRDFTLLNDRNITNVSPWTKVDSPHVIKIREAFTTHAFEQKSIVFVYNYLPSCPSLYDLFFASPVFRKRTSSFYFSQPLKATKEVLWCFASQLISALYSIHSSGLAAKMVSLKNVLMVGKMRLAIFGLGIMDVIQEESTEPLTSLQRNDCRDVGLILLALATDTENVTLSTAKAHLTRLKTIVSTDASLVELIEVLIFNEELRIQTLLPTMLSYMVNNYESVLLMEDVYETYLAEQVENDRLLRLLLKLEFLDDRPEYVDDPDWSASGVYFVIRLFRKYMFQVQTIDDASKKPTLQSTTTPPRKLLNKAHLLSCLNKLDAGTDEQILLEDEFTRIIMSFKEVKTTINTAFMELERRCSNNLSVKK.

The C3H1-type zinc-finger motif lies at 9–38; it reads FSTNIPCRNEQLYGRCPYIDKGCFFQHKNQ. 2 disordered regions span residues 38 to 58 and 82 to 123; these read QDNA…PQNS and SSAS…TVSL. The span at 41 to 50 shows a compositional bias: low complexity; sequence APASSKPPSA. Residues 96–106 are compositionally biased toward polar residues; sequence KSYSSALSSGK. Ser165 carries the phosphoserine modification.

It belongs to the protein kinase superfamily. PAN3 family.

It is found in the cytoplasm. In terms of biological role, regulatory subunit of the poly(A)-nuclease (PAN) deadenylation complex. The sequence is that of PAB-dependent poly(A)-specific ribonuclease subunit pan3-like from Schizosaccharomyces pombe (strain 972 / ATCC 24843) (Fission yeast).